A 489-amino-acid polypeptide reads, in one-letter code: Cysteine--tRNA ligase (489 aa).

Zn(2+) is bound at residue cysteine 29. The 'HIGH' region motif lies at 31–41 (VTVYDYCHLGH). Residues cysteine 215, histidine 240, and glutamate 244 each contribute to the Zn(2+) site. The 'KMSKS' region motif lies at 272-276 (KMSKS). Lysine 275 provides a ligand contact to ATP.

It belongs to the class-I aminoacyl-tRNA synthetase family. Monomer. Zn(2+) serves as cofactor.

It is found in the cytoplasm. The catalysed reaction is tRNA(Cys) + L-cysteine + ATP = L-cysteinyl-tRNA(Cys) + AMP + diphosphate. This is Cysteine--tRNA ligase from Trichodesmium erythraeum (strain IMS101).